Here is a 334-residue protein sequence, read N- to C-terminus: 3-dehydroquinate synthase (334 aa).

This sequence belongs to the archaeal-type DHQ synthase family.

The catalysed reaction is 2-amino-2,3,7-trideoxy-D-lyxo-hept-6-ulosonate + NAD(+) + H2O = 3-dehydroquinate + NH4(+) + NADH + H(+). In terms of biological role, catalyzes the oxidative deamination and cyclization of 2-amino-3,7-dideoxy-D-threo-hept-6-ulosonic acid (ADH) to yield 3-dehydroquinate (DHQ), which is fed into the canonical shikimic pathway of aromatic amino acid biosynthesis. This chain is 3-dehydroquinate synthase, found in Korarchaeum cryptofilum (strain OPF8).